A 320-amino-acid chain; its full sequence is Methenyltetrahydromethanopterin cyclohydrolase (320 aa).

The protein belongs to the MCH family.

It is found in the cytoplasm. The enzyme catalyses 5,10-methenyl-5,6,7,8-tetrahydromethanopterin + H2O = N(5)-formyl-5,6,7,8-tetrahydromethanopterin + H(+). It functions in the pathway one-carbon metabolism; methanogenesis from CO(2); 5,10-methenyl-5,6,7,8-tetrahydromethanopterin from CO(2): step 3/3. Functionally, catalyzes the reversible interconversion of 5-formyl-H(4)MPT to methenyl-H(4)MPT(+). This is Methenyltetrahydromethanopterin cyclohydrolase (mch) from Methanothermobacter thermautotrophicus (strain ATCC 29096 / DSM 1053 / JCM 10044 / NBRC 100330 / Delta H) (Methanobacterium thermoautotrophicum).